Consider the following 363-residue polypeptide: Dihydroorotate dehydrogenase (quinone) (363 aa).

FMN contacts are provided by residues 62-66 (AGYDK) and Thr-86. Lys-66 contributes to the substrate binding site. Residue 111 to 115 (NRLGF) coordinates substrate. FMN is bound by residues Asn-140 and Asn-171. Asn-171 serves as a coordination point for substrate. Catalysis depends on Ser-174, which acts as the Nucleophile. Position 176 (Asn-176) interacts with substrate. 2 residues coordinate FMN: Lys-216 and Ser-244. 245-246 (NT) is a substrate binding site. FMN is bound by residues Gly-266, Gly-295, and 316–317 (YT).

Belongs to the dihydroorotate dehydrogenase family. Type 2 subfamily. In terms of assembly, monomer. The cofactor is FMN.

The protein localises to the cell membrane. The catalysed reaction is (S)-dihydroorotate + a quinone = orotate + a quinol. Its pathway is pyrimidine metabolism; UMP biosynthesis via de novo pathway; orotate from (S)-dihydroorotate (quinone route): step 1/1. Functionally, catalyzes the conversion of dihydroorotate to orotate with quinone as electron acceptor. The sequence is that of Dihydroorotate dehydrogenase (quinone) from Chelativorans sp. (strain BNC1).